A 156-amino-acid polypeptide reads, in one-letter code: Small ribosomal subunit protein uS7c (156 aa).

It belongs to the universal ribosomal protein uS7 family. In terms of assembly, part of the 30S ribosomal subunit.

Its subcellular location is the plastid. The protein resides in the chloroplast. Its function is as follows. One of the primary rRNA binding proteins, it binds directly to 16S rRNA where it nucleates assembly of the head domain of the 30S subunit. The sequence is that of Small ribosomal subunit protein uS7c (rps7) from Chlorella vulgaris (Green alga).